The chain runs to 309 residues: Ubiquitin domain-containing protein UBFD1 (309 aa).

Positions 1-80 are disordered; that stretch reads MAAAGAPDGM…VSNGEDAGGG (80 aa). A compositionally biased stretch (acidic residues) spans 9–19; it reads GMEEPGMDTEA. Residues 35 to 57 are compositionally biased toward low complexity; it reads EAEAAAGAAAEDSGAARGSLQPA. In terms of domain architecture, Ubiquitin-like spans 84 to 159; the sequence is ELVDLKIIWN…IMVVGSTIND (76 aa). Residues 171–204 are disordered; sequence QQDAKAEENKKEPLCRQKQHRKVLDKGKPEDVMP. 2 stretches are compositionally biased toward basic and acidic residues: residues 174-185 and 192-201; these read AKAEENKKEPLC and KVLDKGKPED.

In terms of assembly, binds polyubiquitin.

May play a role as NF-kappa-B regulator. The sequence is that of Ubiquitin domain-containing protein UBFD1 (UBFD1) from Homo sapiens (Human).